A 56-amino-acid polypeptide reads, in one-letter code: Large ribosomal subunit protein bL32 (56 aa).

The segment at 1–37 (MAVQQNKKSRSKRGMRRSHDALSTAQLSVDATSGELH) is disordered. Basic residues predominate over residues 7–16 (KKSRSKRGMR). Polar residues predominate over residues 21–31 (ALSTAQLSVDA).

The protein belongs to the bacterial ribosomal protein bL32 family.

The chain is Large ribosomal subunit protein bL32 from Shewanella pealeana (strain ATCC 700345 / ANG-SQ1).